Here is a 311-residue protein sequence, read N- to C-terminus: Probable 5-dehydro-4-deoxyglucarate dehydratase (311 aa).

This sequence belongs to the DapA family.

The catalysed reaction is 5-dehydro-4-deoxy-D-glucarate + H(+) = 2,5-dioxopentanoate + CO2 + H2O. Its pathway is carbohydrate acid metabolism; D-glucarate degradation; 2,5-dioxopentanoate from D-glucarate: step 2/2. This Ralstonia nicotianae (strain ATCC BAA-1114 / GMI1000) (Ralstonia solanacearum) protein is Probable 5-dehydro-4-deoxyglucarate dehydratase.